Here is a 127-residue protein sequence, read N- to C-terminus: Riboflavin kinase (127 aa).

Gly-10–Arg-15 provides a ligand contact to CDP. 2 residues coordinate Mg(2+): Thr-39 and Asn-41. Residues Thr-96 and Glu-104 each coordinate FMN. Ile-109–Arg-112 contacts CDP.

This sequence belongs to the archaeal riboflavin kinase family. Requires Mg(2+) as cofactor.

The catalysed reaction is riboflavin + CTP = CDP + FMN + H(+). It participates in cofactor biosynthesis; FMN biosynthesis; FMN from riboflavin (CTP route): step 1/1. Functionally, catalyzes the CTP-dependent phosphorylation of riboflavin (vitamin B2) to form flavin mononucleotide (FMN). The chain is Riboflavin kinase from Methanococcus maripaludis (strain C5 / ATCC BAA-1333).